We begin with the raw amino-acid sequence, 124 residues long: MYFFIKTINKYLYKLIYSFIVFYQKIISPILPARCRYYPTCSNYGKQALAWYGVWNGSLLLLKRIGRCHPLGGHGIDFVPLPLASYHYQHVSLIMSACMKAQGLYVYRDNNGYVARLNHMMKLT.

The protein belongs to the UPF0161 family.

The protein localises to the cell inner membrane. Could be involved in insertion of integral membrane proteins into the membrane. In Psychrobacter arcticus (strain DSM 17307 / VKM B-2377 / 273-4), this protein is Putative membrane protein insertion efficiency factor.